The sequence spans 118 residues: UPF0342 protein ABC1519 (118 aa).

It belongs to the UPF0342 family.

The protein is UPF0342 protein ABC1519 of Shouchella clausii (strain KSM-K16) (Alkalihalobacillus clausii).